Here is a 3856-residue protein sequence, read N- to C-terminus: Hybrid PKS-NRPS synthetase traA (3856 aa).

The Ketosynthase family 3 (KS3) domain maps to 6 to 438 (PEPIAIVGSG…GTNGHAILEE (433 aa)). Active-site for beta-ketoacyl synthase activity residues include C179, H318, and H358. The interval 554 to 885 (IFTGQGAQWA…FSDALGFVWT (332 aa)) is malonyl-CoA:ACP transacylase (MAT) domain. Residues 943–1081 (HELLGVPSPN…GKVTVIYGTP (139 aa)) are N-terminal hotdog fold. The segment at 943 to 1247 (HELLGVPSPN…LSMKPFSPAT (305 aa)) is dehydratase (DH) domain. Residues 943-1249 (HELLGVPSPN…MKPFSPATAD (307 aa)) form the PKS/mFAS DH domain. The Proton acceptor; for dehydratase activity role is filled by H975. A C-terminal hotdog fold region spans residues 1096–1249 (MVDIQAEQFY…MKPFSPATAD (154 aa)). The Proton donor; for dehydratase activity role is filled by D1156. A methyltransferase (MT) domain region spans residues 1290–1456 (LACVAQQIVH…RKAGFSGIDS (167 aa)). The tract at residues 1984–2158 (TYVLVGLSGR…ATSLDIGSIV (175 aa)) is ketoreductase (KR) domain. In terms of domain architecture, Carrier 1 spans 2266 to 2347 (ADALEILKEL…TLCQQALEKL (82 aa)). The residue at position 2307 (S2307) is an O-(pantetheine 4'-phosphoryl)serine. A disordered region spans residues 2351–2422 (ILPNVESGGP…SSTPATVLSN (72 aa)). 2 stretches are compositionally biased toward low complexity: residues 2357–2369 (SGGPSKTGSSKPT) and 2399–2418 (TTSPQSTLSSDQSPSSTPAT). The interval 2446 to 2884 (VKTELVSFQQ…FALFSDKELK (439 aa)) is condensation (C) domain. Residues 2910 to 3310 (QIAKENDDKV…GAMVFHNRIA (401 aa)) form an adenylation (A) domain region. Residues 3403 to 3429 (SKTDRKALKELPLPQRSNHDTGDNTES) are disordered. Residues 3428 to 3507 (ESLTETMLEL…DMTQKIEESL (80 aa)) enclose the Carrier 2 domain. S3467 carries the post-translational modification O-(pantetheine 4'-phosphoryl)serine. The tract at residues 3544 to 3768 (VTGSGGFLGK…EMTPIHSAAS (225 aa)) is reductase (R) domain.

This sequence in the C-terminal section; belongs to the NRP synthetase family.

The protein operates within secondary metabolite biosynthesis. Functionally, hybrid PKS-NRPS synthetase; part of the tra gene cluster that produces terrestric acid. The clavatol biosynthesis cluster cla and the terrestric acid cluster tra are both involved in the production of peniphenones and penilactones. The non-reducing PKS claF is responsible for the formation of clavatol from successive condensations of 3 malonyl-CoA units, presumably with a simple acetyl-CoA starter unit, and 2 methylation steps. The esterase claE probably collaborates with claF by catalyzing the hydrolysis of ACP-bound acyl intermediates to free the ACP from stalled intermediates. The clavatol oxidase claD then converts clavatol to hydroxyclavatol. Spontaneous dehydration of hydroxyclavatol leads to the accumulation of the highly active ortho-quinone methide. On the other hand, the PKS-NRPS hybrid traA is involved in the formation of crustosic acid, with the help of traB and traD. The polyketide synthase module (PKS) of traA is responsible for the synthesis of the polyketide backbone via the condensation of an acetyl-CoA starter unit with 3 malonyl-CoA units. The downstream nonribosomal peptide synthetase (NRPS) module then amidates the carboxyl end of the polyketide with L-malic acid. Because traA lacks a designated enoylreductase (ER) domain, the required activity is provided the enoyl reductase traG. Crustosic acid undergoes decarboxylation and isomerization to the terrestric acid, catalyzed by the 2-oxoglutarate-dependent dioxygenase traH. Both acids are further converted to the 2 gamma-butyrolactones (R)-5-methyltetronic acid and (S)-5-carboxylmethyltetronic acid, with involvement of the cytochrome P450 monooxygenase claJ. Spontaneous addition of the methide to these gamma-butyrolactones leads to peniphenone D and penilactone D, which undergo again stereospecific attacking by methide to give penilactones A and B. The chain is Hybrid PKS-NRPS synthetase traA from Penicillium crustosum (Blue mold fungus).